A 277-amino-acid chain; its full sequence is Uridine-cytidine kinase 1 (277 aa).

Residue 24–32 (GGTASGKST) coordinates ATP. Asp-81, Tyr-109, His-114, Arg-163, Arg-172, and Gln-180 together coordinate substrate. An ATP-binding site is contributed by Asp-209. The interval 241 to 277 (NHGRSLKRGVAEHGENPSGSSSNLTKRPLLEPSTRPH) is disordered.

Belongs to the uridine kinase family.

The catalysed reaction is uridine + ATP = UMP + ADP + H(+). It carries out the reaction cytidine + ATP = CMP + ADP + H(+). Its pathway is pyrimidine metabolism; CTP biosynthesis via salvage pathway; CTP from cytidine: step 1/3. The protein operates within pyrimidine metabolism; UMP biosynthesis via salvage pathway; UMP from uridine: step 1/1. Functionally, phosphorylates uridine and cytidine to uridine monophosphate and cytidine monophosphate. Does not phosphorylate deoxyribonucleosides or purine ribonucleosides. Can use ATP or GTP as a phosphate donor. This Danio rerio (Zebrafish) protein is Uridine-cytidine kinase 1 (uck1).